The chain runs to 405 residues: Elongation factor Tu (405 aa).

Residues 10–213 (KEHVNVGTIG…AMDEYIPTPQ (204 aa)) form the tr-type G domain. The tract at residues 19–26 (GHVDHGKS) is G1. 19–26 (GHVDHGKS) is a binding site for GTP. Ser26 contacts Mg(2+). Positions 64–68 (GITIN) are G2. The tract at residues 85-88 (DCPG) is G3. GTP contacts are provided by residues 85 to 89 (DCPGH) and 140 to 143 (NKCD). Residues 140–143 (NKCD) are G4. The tract at residues 178–180 (SAL) is G5.

This sequence belongs to the TRAFAC class translation factor GTPase superfamily. Classic translation factor GTPase family. EF-Tu/EF-1A subfamily. In terms of assembly, monomer.

It localises to the cytoplasm. It carries out the reaction GTP + H2O = GDP + phosphate + H(+). GTP hydrolase that promotes the GTP-dependent binding of aminoacyl-tRNA to the A-site of ribosomes during protein biosynthesis. The sequence is that of Elongation factor Tu from Aquifex aeolicus (strain VF5).